We begin with the raw amino-acid sequence, 425 residues long: Phosphoribosylamine--glycine ligase (425 aa).

One can recognise an ATP-grasp domain in the interval 109-315 (KALMQEAGIP…LEELILACVQ (207 aa)). 135–195 (IQAQGAPIVV…EECLTGQEVS (61 aa)) lines the ATP pocket. Residues glutamate 285 and asparagine 287 each contribute to the Mg(2+) site.

This sequence belongs to the GARS family. The cofactor is Mg(2+). It depends on Mn(2+) as a cofactor.

The catalysed reaction is 5-phospho-beta-D-ribosylamine + glycine + ATP = N(1)-(5-phospho-beta-D-ribosyl)glycinamide + ADP + phosphate + H(+). It participates in purine metabolism; IMP biosynthesis via de novo pathway; N(1)-(5-phospho-D-ribosyl)glycinamide from 5-phospho-alpha-D-ribose 1-diphosphate: step 2/2. The polypeptide is Phosphoribosylamine--glycine ligase (Nostoc sp. (strain PCC 7120 / SAG 25.82 / UTEX 2576)).